A 198-amino-acid chain; its full sequence is Holliday junction branch migration complex subunit RuvA (198 aa).

The segment at 1–64 (MYEYIKGEYM…EDFIGLYGFE (64 aa)) is domain I. A domain II region spans residues 65–143 (SLEELEMFKM…TDELLNCIDE (79 aa)). The segment at 144–154 (FDDVTQDNSLA) is flexible linker. Residues 154–198 (AVSEALSALISLGYTEKEAEKVLRDVDKSESVENIIKSALVKLMG) form a domain III region.

This sequence belongs to the RuvA family. Homotetramer. Forms an RuvA(8)-RuvB(12)-Holliday junction (HJ) complex. HJ DNA is sandwiched between 2 RuvA tetramers; dsDNA enters through RuvA and exits via RuvB. An RuvB hexamer assembles on each DNA strand where it exits the tetramer. Each RuvB hexamer is contacted by two RuvA subunits (via domain III) on 2 adjacent RuvB subunits; this complex drives branch migration. In the full resolvosome a probable DNA-RuvA(4)-RuvB(12)-RuvC(2) complex forms which resolves the HJ.

It is found in the cytoplasm. The RuvA-RuvB-RuvC complex processes Holliday junction (HJ) DNA during genetic recombination and DNA repair, while the RuvA-RuvB complex plays an important role in the rescue of blocked DNA replication forks via replication fork reversal (RFR). RuvA specifically binds to HJ cruciform DNA, conferring on it an open structure. The RuvB hexamer acts as an ATP-dependent pump, pulling dsDNA into and through the RuvAB complex. HJ branch migration allows RuvC to scan DNA until it finds its consensus sequence, where it cleaves and resolves the cruciform DNA. The protein is Holliday junction branch migration complex subunit RuvA of Clostridium botulinum (strain Eklund 17B / Type B).